The following is a 274-amino-acid chain: Urease accessory protein UreD (274 aa).

Belongs to the UreD family. In terms of assembly, ureD, UreF and UreG form a complex that acts as a GTP-hydrolysis-dependent molecular chaperone, activating the urease apoprotein by helping to assemble the nickel containing metallocenter of UreC. The UreE protein probably delivers the nickel.

It localises to the cytoplasm. Required for maturation of urease via the functional incorporation of the urease nickel metallocenter. The sequence is that of Urease accessory protein UreD from Lachnoclostridium phytofermentans (strain ATCC 700394 / DSM 18823 / ISDg) (Clostridium phytofermentans).